Here is a 527-residue protein sequence, read N- to C-terminus: Rhesus-like glycoprotein A (527 aa).

Residues 1 to 18 (MTHNDDDHKWVTTKRKEP) are Cytoplasmic-facing. Residues 19 to 39 (IFFTVILFIFQIFMIICFAAL) form a helical membrane-spanning segment. Over 40–70 (TGYDTNKNYTGSENPDEFKGGEVQERVNNFY) the chain is Extracellular. Asparagine 47 is a glycosylation site (N-linked (GlcNAc...) asparagine). The helical transmembrane segment at 71-91 (GYFRDINIMIFFGFGFLMTFL) threads the bilayer. Over 92 to 99 (RRYGYSAL) the chain is Cytoplasmic. Residues 100-120 (GYTFIISALVSQWSVLLNGFF) traverse the membrane as a helical segment. The Extracellular segment spans residues 121-141 (EAWSHSNKHGEFPSTWEFSMD). The chain crosses the membrane as a helical span at residues 142-162 (SLLQGFFCSGSVMISYGAILG). The Cytoplasmic segment spans residues 163–166 (RVTP). The chain crosses the membrane as a helical span at residues 167 to 187 (LHMLIMGIIEPIFFFLNVFIG). The Extracellular segment spans residues 188–195 (EMNLEAID). Residues 196–216 (VGGGMYIHLFGSVFGLTVAWF) traverse the membrane as a helical segment. The Cytoplasmic portion of the chain corresponds to 217-236 (LTDRKSKECTDNAPSYSGDN). A helical membrane pass occupies residues 237–257 (FAMAGTLFLWMMWPSFNAAIA). Residues 258 to 263 (PLGEPQ) lie on the Extracellular side of the membrane. Residues 264–284 (FRAIANTFLSLTGSTVATFIV) form a helical membrane-spanning segment. Residues 285 to 299 (SRLFSHLGNKLDMVH) are Cytoplasmic-facing. Residues 300-319 (VQNSSLAGGVVQGCIAHMNI) form a helical membrane-spanning segment. At 320 to 321 (NP) the chain is on the extracellular side. A helical transmembrane segment spans residues 322-342 (GGAIAMGFIAGTISVCGYLFI). Residues 343–357 (TPKVQRKLHIQDTCG) are Cytoplasmic-facing. A helical membrane pass occupies residues 358–378 (ILNLHCIPGFLGSIAAIFAAI). The Extracellular portion of the chain corresponds to 379–406 (KGLNNPNMYSKVEFEQIFRAGDSQASAN). The chain crosses the membrane as a helical span at residues 407–427 (LIATMVSIGLGIVGGLLVGVI). Residues 428–527 (LLQLKKIKGL…EEDEFKQEPI (100 aa)) are Cytoplasmic-facing. The segment at 471–527 (SEDTAGGDDEEEGVGKEHGAVEMGKHNRIVQPKQDNKYHKQLPSDDEEEDEFKQEPI) is disordered. Basic and acidic residues predominate over residues 483–495 (GVGKEHGAVEMGK). Residues 514-527 (SDDEEEDEFKQEPI) are compositionally biased toward acidic residues.

It belongs to the ammonium transporter (TC 2.A.49) family. Rh subfamily. As to quaternary structure, interacts with ap1g1.

It localises to the contractile vacuole. The protein resides in the membrane. Its function is as follows. May be a carbon dioxide/bicarbonate transporter. The polypeptide is Rhesus-like glycoprotein A (rhgA) (Dictyostelium discoideum (Social amoeba)).